An 88-amino-acid polypeptide reads, in one-letter code: MDFFSWVMITAGFGMAIGSLGTGIGQGLAVKSALEGVARNPGASGKILTTMMIGLAMIESLAIYVFVVAMIILFANPFQDVVLELLAK.

2 helical membrane-spanning segments follow: residues 4–24 and 53–73; these read FSWVMITAGFGMAIGSLGTGI and IGLAMIESLAIYVFVVAMIIL.

This sequence belongs to the ATPase C chain family. As to quaternary structure, F-type ATPases have 2 components, F(1) - the catalytic core - and F(0) - the membrane proton channel. F(1) has five subunits: alpha(3), beta(3), gamma(1), delta(1), epsilon(1). F(0) has three main subunits: a(1), b(2) and c(10-14). The alpha and beta chains form an alternating ring which encloses part of the gamma chain. F(1) is attached to F(0) by a central stalk formed by the gamma and epsilon chains, while a peripheral stalk is formed by the delta and b chains.

The protein resides in the cell inner membrane. Its function is as follows. F(1)F(0) ATP synthase produces ATP from ADP in the presence of a proton or sodium gradient. F-type ATPases consist of two structural domains, F(1) containing the extramembraneous catalytic core and F(0) containing the membrane proton channel, linked together by a central stalk and a peripheral stalk. During catalysis, ATP synthesis in the catalytic domain of F(1) is coupled via a rotary mechanism of the central stalk subunits to proton translocation. Key component of the F(0) channel; it plays a direct role in translocation across the membrane. A homomeric c-ring of between 10-14 subunits forms the central stalk rotor element with the F(1) delta and epsilon subunits. The polypeptide is ATP synthase subunit c 2 (Syntrophotalea carbinolica (strain DSM 2380 / NBRC 103641 / GraBd1) (Pelobacter carbinolicus)).